A 593-amino-acid chain; its full sequence is Protein PSP2 (593 aa).

Over residues 56–65 the composition is skewed to basic and acidic residues; that stretch reads AGEHQRDGHQ. Residues 56–101 are disordered; that stretch reads AGEHQRDGHQQHPHGGHGPMNRSRFSNAGPFGGGSMGDFANHHHPL. Residues serine 150 and serine 238 each carry the phosphoserine modification. Disordered regions lie at residues 227–248 and 280–593; these read KPFITKTQRSKSNPFGSAKPVD and DSMA…DMPL. Composition is skewed to polar residues over residues 231-241 and 280-290; these read TKTQRSKSNPF and DSMATTATGSK. Serine 340 bears the Phosphoserine mark. Over residues 347–402 the composition is skewed to basic and acidic residues; the sequence is SKPDKSDEFKGGDEQGFEKGGDDKAQLDVSNDKDKGSETDVDKQFTFKNVEREHSM. The segment covering 408 to 426 has biased composition (low complexity); that stretch reads NGNHNNNNGNFRGSNRYRG. Arginine 419, arginine 425, and arginine 440 each carry omega-N-methylarginine. Dimethylated arginine is present on arginine 443. Arginine 447 carries the omega-N-methylarginine modification. A compositionally biased stretch (low complexity) spans 449-477; that stretch reads GSSYNNNNNNTNDNNNNNNNSSSNNNNGS. Composition is skewed to polar residues over residues 486–497 and 505–516; these read EEGLTSDSSLDA and FTNSTSNTQQYS. The residue at position 522 (serine 522) is a Phosphoserine. Positions 534-545 are enriched in low complexity; the sequence is RNNGRGNYNSSG. An omega-N-methylarginine mark is found at arginine 538, arginine 551, and arginine 575. Residues 546-563 are compositionally biased toward gly residues; sequence MNGGSRGRGFGRGRGFGR. The span at 578 to 587 shows a compositional bias: low complexity; sequence SGNYSNYNNR.

It is found in the cytoplasm. The protein resides in the P-body. Its subcellular location is the stress granule. DNA polymerase alpha mutation suppressor. Suppressor of group II intron splicing defects of a mutation in MRS2. May play a role in mitochondrial mRNA splicing. In Saccharomyces cerevisiae (strain ATCC 204508 / S288c) (Baker's yeast), this protein is Protein PSP2.